The sequence spans 201 residues: Transmembrane 4 L6 family member 18 (201 aa).

Residues 1-9 (MGSRKCGGC) lie on the Cytoplasmic side of the membrane. A helical membrane pass occupies residues 10 to 30 (LSCLLIPLALWSIIVNILLYF). At 31–49 (PNGQTSYASSNKLTNYVWY) the chain is on the extracellular side. Residues 50-70 (FEGICFSGIMMLIVTTVLLVL) form a helical membrane-spanning segment. The Cytoplasmic portion of the chain corresponds to 71 to 93 (ENNNNYKCCQSENCSKKYVTLLS). A helical membrane pass occupies residues 94–114 (IIFSSLGIAFSGYCLVISALG). At 115-157 (LVQGPYCRTLDGWEYAFEGTAGRFLTDSSIWIQCLEPAHVVEW) the chain is on the extracellular side. Residues 158–178 (NIILFSILITLSGLQVIICLI) traverse the membrane as a helical segment. At 179 to 201 (RVVMQLSKILCGSYSVIFQPGII) the chain is on the cytoplasmic side.

This sequence belongs to the L6 tetraspanin family.

The protein resides in the membrane. The protein is Transmembrane 4 L6 family member 18 (TM4SF18) of Homo sapiens (Human).